We begin with the raw amino-acid sequence, 387 residues long: Cysteine desulfurase IscS (387 aa).

Pyridoxal 5'-phosphate-binding positions include A73–T74, N155, Q183, and S203–H205. The residue at position 206 (K206) is an N6-(pyridoxal phosphate)lysine. T241 contributes to the pyridoxal 5'-phosphate binding site. Residue C328 is the Cysteine persulfide intermediate of the active site. Residue C328 participates in [2Fe-2S] cluster binding.

The protein belongs to the class-V pyridoxal-phosphate-dependent aminotransferase family. NifS/IscS subfamily. In terms of assembly, homodimer. Forms a heterotetramer with IscU, interacts with other sulfur acceptors. Requires pyridoxal 5'-phosphate as cofactor.

The protein localises to the cytoplasm. The enzyme catalyses (sulfur carrier)-H + L-cysteine = (sulfur carrier)-SH + L-alanine. Its pathway is cofactor biosynthesis; iron-sulfur cluster biosynthesis. In terms of biological role, master enzyme that delivers sulfur to a number of partners involved in Fe-S cluster assembly, tRNA modification or cofactor biosynthesis. Catalyzes the removal of elemental sulfur atoms from cysteine to produce alanine. Functions as a sulfur delivery protein for Fe-S cluster synthesis onto IscU, an Fe-S scaffold assembly protein, as well as other S acceptor proteins. This Helicobacter pylori (strain Shi470) protein is Cysteine desulfurase IscS.